Reading from the N-terminus, the 20-residue chain is Small ribosomal subunit protein bS20 (20 aa).

The disordered stretch occupies residues 1 to 20 (ANNPGARKAIRKIEARTEVN). The span at 11–20 (RKIEARTEVN) shows a compositional bias: basic and acidic residues.

It belongs to the bacterial ribosomal protein bS20 family.

In terms of biological role, binds directly to 16S ribosomal RNA. In Brevundimonas vesicularis (Pseudomonas vesicularis), this protein is Small ribosomal subunit protein bS20 (rpsT).